Reading from the N-terminus, the 534-residue chain is 26S proteasome non-ATPase regulatory subunit 3 (534 aa).

The span at 1–16 shows a compositional bias: basic and acidic residues; sequence MKQEGSARRRGADKAK. The interval 1-68 is disordered; it reads MKQEGSARRR…AAEHSQRELD (68 aa). A compositionally biased stretch (pro residues) spans 17–32; that stretch reads PPPGGGEQEPPPPPAP. Residue lysine 38 forms a Glycyl lysine isopeptide (Lys-Gly) (interchain with G-Cter in SUMO1); alternate linkage. A Glycyl lysine isopeptide (Lys-Gly) (interchain with G-Cter in SUMO2); alternate cross-link involves residue lysine 38. Positions 49-61 are enriched in low complexity; sequence GETAGKTAAAAAE. The 180-residue stretch at 286–465 folds into the PCI domain; that stretch reads ARYLYYTGRI…GYVQSKEMID (180 aa). Phosphoserine occurs at positions 418 and 430. Residues 500–534 form a disordered region; the sequence is SYNKDLESAEERREREQQDLEFAKEMAEDDDDSFP. Residues 501 to 525 show a composition bias toward basic and acidic residues; it reads YNKDLESAEERREREQQDLEFAKEM.

Belongs to the proteasome subunit S3 family. Component of the 19S proteasome regulatory particle complex. The 26S proteasome consists of a 20S core particle (CP) and two 19S regulatory subunits (RP). The regulatory particle is made of a lid composed of 9 subunits including PSMD3, a base containing 6 ATPases and few additional components. Interacts with UBQLN1 (via ubiquitin-like domain). Interacts with ERCC6.

Its function is as follows. Component of the 26S proteasome, a multiprotein complex involved in the ATP-dependent degradation of ubiquitinated proteins. This complex plays a key role in the maintenance of protein homeostasis by removing misfolded or damaged proteins, which could impair cellular functions, and by removing proteins whose functions are no longer required. Therefore, the proteasome participates in numerous cellular processes, including cell cycle progression, apoptosis, or DNA damage repair. The sequence is that of 26S proteasome non-ATPase regulatory subunit 3 (PSMD3) from Bos taurus (Bovine).